Consider the following 829-residue polypeptide: ATP-dependent RNA helicase drs1 (829 aa).

Disordered regions lie at residues 1-96 (MAPS…MDTE) and 145-295 (RRER…MSSF). The segment covering 20–32 (DNEEDIPLEEEQE) has biased composition (acidic residues). The segment covering 48-59 (KQKKKNNKKSKK) has biased composition (basic residues). Over residues 63–78 (TEDDDDEAETKEDDAA) the composition is skewed to acidic residues. The span at 150-163 (AAKEGKTTATKEEE) shows a compositional bias: basic and acidic residues. 4 stretches are compositionally biased toward acidic residues: residues 164–190 (DKMEVDEEEDDIEEIDVDLDDDEDGVL), 218–228 (DGEDEDSEGED), 235–246 (DEDEGDASDDDS), and 258–271 (QSSDDEEGIDEEEE). The segment covering 272–291 (AKMKEFFAPEEENQPKKKGE) has biased composition (basic and acidic residues). Positions 293-321 (SSFQEMSLSRPILRGLTSVGFTKPTPIQA) match the Q motif motif. The Helicase ATP-binding domain occupies 324–498 (IPISLMGKDV…RAGLNKPVRI (175 aa)). Residue 337–344 (AVTGSGKT) coordinates ATP. The DEAD box signature appears at 446–449 (DEAD). Positions 528–707 (YLLHICKTIY…EKQLQNMEMQ (180 aa)) constitute a Helicase C-terminal domain. Residues 728-829 (TWFETQEDKK…KGGKGKGRRK (102 aa)) form a disordered region. The segment covering 749 to 791 (GVRDKLKSKNEGKLSNKDRKKLDTMQERKQERTYKKGSAERAG) has biased composition (basic and acidic residues). Residues 800-815 (KVVKKVGRSAGPKKKG) are compositionally biased toward basic residues.

This sequence belongs to the DEAD box helicase family. DDX27/DRS1 subfamily. In terms of assembly, associates with pre-ribosomal particles.

Its subcellular location is the nucleus. The protein resides in the nucleolus. It catalyses the reaction ATP + H2O = ADP + phosphate + H(+). ATP-binding RNA helicase involved in ribosome assembly. This is ATP-dependent RNA helicase drs1 (drh-11) from Neurospora crassa (strain ATCC 24698 / 74-OR23-1A / CBS 708.71 / DSM 1257 / FGSC 987).